Here is a 93-residue protein sequence, read N- to C-terminus: Large ribosomal subunit protein uL23 (93 aa).

It belongs to the universal ribosomal protein uL23 family. Part of the 50S ribosomal subunit. Contacts protein L29, and trigger factor when it is bound to the ribosome.

One of the early assembly proteins it binds 23S rRNA. One of the proteins that surrounds the polypeptide exit tunnel on the outside of the ribosome. Forms the main docking site for trigger factor binding to the ribosome. The chain is Large ribosomal subunit protein uL23 from Opitutus terrae (strain DSM 11246 / JCM 15787 / PB90-1).